The primary structure comprises 186 residues: Interferon lambda-3 (186 aa).

Positions 1-21 (MVCYGVTIILVGTLGSLLVGA) are cleaved as a signal peptide. 3 disulfides stabilise this stretch: Cys31–Cys128, Cys65–Cys160, and Cys178–Cys185.

This sequence belongs to the lambda interferon family.

The protein resides in the secreted. Functionally, cytokine which plays a critical role in the antiviral host defense, predominantly in the epithelial tissues. Acts as a ligand for the heterodimeric class II cytokine receptor composed of IL10RB and IFNLR1, and receptor engagement leads to the activation of the JAK/STAT signaling pathway resulting in the expression of IFN-stimulated genes (ISG), which mediate the antiviral state. Has a restricted receptor distribution and therefore restricted targets: is primarily active in epithelial cells and this cell type-selective action is because of the epithelial cell-specific expression of its receptor IFNLR1. Exhibits antiviral activity against the H5N1 influenza A virus. Induces the expression of the antiviral MX protein in epithelial-rich tissues, such as intestine, trachea and lung. This chain is Interferon lambda-3 (IFNL3), found in Gallus gallus (Chicken).